We begin with the raw amino-acid sequence, 302 residues long: NmrA-like family domain-containing protein DDB_G0286605 (302 aa).

NADP(+) is bound by residues 9 to 14 (GGTGYQ), 35 to 39 (RNPES), 56 to 57 (DE), 78 to 80 (TNS), K130, and 157 to 160 (YFQN).

Belongs to the NmrA-type oxidoreductase family.

May be a redox sensor protein. This Dictyostelium discoideum (Social amoeba) protein is NmrA-like family domain-containing protein DDB_G0286605.